The following is a 151-amino-acid chain: Putative calcium-binding protein CML23 (151 aa).

EF-hand domains follow at residues 2-37 (VASD…SLGE), 39-74 (MPDE…MEAD), 84-119 (ETCR…LGTH), and 120-151 (LDVA…MMMA). Ca(2+) is bound by residues Asp15, Asp17, Asp19, Lys21, Glu26, Asp52, Asp54, Asp56, and Glu63. Ca(2+) is bound by residues Asp133, Asn135, Asp137, and Glu144.

Potential calcium sensor. The sequence is that of Putative calcium-binding protein CML23 (CML23) from Oryza sativa subsp. japonica (Rice).